Reading from the N-terminus, the 131-residue chain is Small ribosomal subunit protein uS8 (131 aa).

The protein belongs to the universal ribosomal protein uS8 family. Part of the 30S ribosomal subunit. Contacts proteins S5 and S12.

Its function is as follows. One of the primary rRNA binding proteins, it binds directly to 16S rRNA central domain where it helps coordinate assembly of the platform of the 30S subunit. The protein is Small ribosomal subunit protein uS8 of Dehalococcoides mccartyi (strain CBDB1).